Here is a 426-residue protein sequence, read N- to C-terminus: S-adenosylmethionine synthase (426 aa).

Position 22 (H22) interacts with ATP. D24 contacts Mg(2+). E50 provides a ligand contact to K(+). L-methionine-binding residues include E63 and Q106. The flexible loop stretch occupies residues 106–116 (QSPDISQGVTA). Residues 181-183 (DGK), 257-258 (KF), D266, 272-273 (RK), A289, and K293 each bind ATP. An L-methionine-binding site is contributed by D266. K297 is an L-methionine binding site.

The protein belongs to the AdoMet synthase family. As to quaternary structure, homotetramer; dimer of dimers. The cofactor is Mg(2+). K(+) serves as cofactor.

Its subcellular location is the cytoplasm. The enzyme catalyses L-methionine + ATP + H2O = S-adenosyl-L-methionine + phosphate + diphosphate. It functions in the pathway amino-acid biosynthesis; S-adenosyl-L-methionine biosynthesis; S-adenosyl-L-methionine from L-methionine: step 1/1. In terms of biological role, catalyzes the formation of S-adenosylmethionine (AdoMet) from methionine and ATP. The overall synthetic reaction is composed of two sequential steps, AdoMet formation and the subsequent tripolyphosphate hydrolysis which occurs prior to release of AdoMet from the enzyme. The protein is S-adenosylmethionine synthase of Synechocystis sp. (strain ATCC 27184 / PCC 6803 / Kazusa).